An 87-amino-acid chain; its full sequence is Large ribosomal subunit protein bL27 (87 aa).

Residues 1–26 form a disordered region; sequence MAHKKGTGSTRNGRDSNSKRLGVKAY.

This sequence belongs to the bacterial ribosomal protein bL27 family.

This is Large ribosomal subunit protein bL27 from Prochlorococcus marinus (strain SARG / CCMP1375 / SS120).